A 223-amino-acid chain; its full sequence is Deoxyribose-phosphate aldolase (223 aa).

Asp-89 serves as the catalytic Proton donor/acceptor. The active-site Schiff-base intermediate with acetaldehyde is Lys-152. Catalysis depends on Lys-181, which acts as the Proton donor/acceptor.

It belongs to the DeoC/FbaB aldolase family. DeoC type 1 subfamily.

The protein localises to the cytoplasm. The catalysed reaction is 2-deoxy-D-ribose 5-phosphate = D-glyceraldehyde 3-phosphate + acetaldehyde. It functions in the pathway carbohydrate degradation; 2-deoxy-D-ribose 1-phosphate degradation; D-glyceraldehyde 3-phosphate and acetaldehyde from 2-deoxy-alpha-D-ribose 1-phosphate: step 2/2. Its function is as follows. Catalyzes a reversible aldol reaction between acetaldehyde and D-glyceraldehyde 3-phosphate to generate 2-deoxy-D-ribose 5-phosphate. This chain is Deoxyribose-phosphate aldolase, found in Listeria welshimeri serovar 6b (strain ATCC 35897 / DSM 20650 / CCUG 15529 / CIP 8149 / NCTC 11857 / SLCC 5334 / V8).